Consider the following 352-residue polypeptide: Photosystem II protein D1 (352 aa).

Thr-2 is subject to N-acetylthreonine. A Phosphothreonine modification is found at Thr-2. 3 helical membrane-spanning segments follow: residues Tyr-29–Ser-46, His-118–Leu-133, and Trp-142–Ala-156. His-118 lines the chlorophyll a pocket. Tyr-126 lines the pheophytin a pocket. Asp-170 and Glu-189 together coordinate [CaMn4O5] cluster. The helical transmembrane segment at Phe-197–Leu-218 threads the bilayer. A chlorophyll a-binding site is contributed by His-198. Residues His-215 and Ser-264–Phe-265 contribute to the a quinone site. His-215 contacts Fe cation. His-272 is a binding site for Fe cation. The helical transmembrane segment at Phe-274–Leu-288 threads the bilayer. [CaMn4O5] cluster-binding residues include His-332, Glu-333, Asp-342, and Ala-344. A propeptide spanning residues Ser-345–Ala-352 is cleaved from the precursor.

It belongs to the reaction center PufL/M/PsbA/D family. In terms of assembly, PSII is composed of 1 copy each of membrane proteins PsbA, PsbB, PsbC, PsbD, PsbE, PsbF, PsbH, PsbI, PsbJ, PsbK, PsbL, PsbM, PsbT, PsbX, PsbY, PsbZ, Psb30/Ycf12, at least 3 peripheral proteins of the oxygen-evolving complex and a large number of cofactors. It forms dimeric complexes. It depends on The D1/D2 heterodimer binds P680, chlorophylls that are the primary electron donor of PSII, and subsequent electron acceptors. It shares a non-heme iron and each subunit binds pheophytin, quinone, additional chlorophylls, carotenoids and lipids. D1 provides most of the ligands for the Mn4-Ca-O5 cluster of the oxygen-evolving complex (OEC). There is also a Cl(-1) ion associated with D1 and D2, which is required for oxygen evolution. The PSII complex binds additional chlorophylls, carotenoids and specific lipids. as a cofactor. In terms of processing, tyr-161 forms a radical intermediate that is referred to as redox-active TyrZ, YZ or Y-Z. C-terminally processed by CTPA; processing is essential to allow assembly of the oxygen-evolving complex and thus photosynthetic growth.

It is found in the plastid. The protein resides in the chloroplast thylakoid membrane. It catalyses the reaction 2 a plastoquinone + 4 hnu + 2 H2O = 2 a plastoquinol + O2. Its function is as follows. Photosystem II (PSII) is a light-driven water:plastoquinone oxidoreductase that uses light energy to abstract electrons from H(2)O, generating O(2) and a proton gradient subsequently used for ATP formation. It consists of a core antenna complex that captures photons, and an electron transfer chain that converts photonic excitation into a charge separation. The D1/D2 (PsbA/PsbD) reaction center heterodimer binds P680, the primary electron donor of PSII as well as several subsequent electron acceptors. The protein is Photosystem II protein D1 of Chlorella ellipsoidea.